Consider the following 258-residue polypeptide: UPF0246 protein YaaA (258 aa).

The protein belongs to the UPF0246 family.

The polypeptide is UPF0246 protein YaaA (Shigella sonnei (strain Ss046)).